Here is a 294-residue protein sequence, read N- to C-terminus: 1D-myo-inositol 2-acetamido-2-deoxy-alpha-D-glucopyranoside deacetylase (294 aa).

The Zn(2+) site is built by histidine 15, aspartate 18, and histidine 150.

Belongs to the MshB deacetylase family. It depends on Zn(2+) as a cofactor.

It carries out the reaction 1D-myo-inositol 2-acetamido-2-deoxy-alpha-D-glucopyranoside + H2O = 1D-myo-inositol 2-amino-2-deoxy-alpha-D-glucopyranoside + acetate. In terms of biological role, catalyzes the deacetylation of 1D-myo-inositol 2-acetamido-2-deoxy-alpha-D-glucopyranoside (GlcNAc-Ins) in the mycothiol biosynthesis pathway. In Streptomyces avermitilis (strain ATCC 31267 / DSM 46492 / JCM 5070 / NBRC 14893 / NCIMB 12804 / NRRL 8165 / MA-4680), this protein is 1D-myo-inositol 2-acetamido-2-deoxy-alpha-D-glucopyranoside deacetylase.